We begin with the raw amino-acid sequence, 563 residues long: Septation ring formation regulator EzrA (563 aa).

Residues 1 to 2 are Extracellular-facing; the sequence is ME. Residues 3–21 traverse the membrane as a helical segment; the sequence is LVIGLLVILLALFAAGYFF. Over 22–563 the chain is Cytoplasmic; the sequence is RKKIYTEIDR…KKIKADQSAS (542 aa). Coiled-coil stretches lie at residues 133–159, 243–276, and 309–529; these read EEKSRGEIEQVRERYSKARKNLLAYSH, KGYKLEHIQIEKELDTLTNQVKRAENALLEELDV, and SKMP…ERLF.

The protein belongs to the EzrA family.

The protein localises to the cell membrane. Its function is as follows. Negative regulator of FtsZ ring formation; modulates the frequency and position of FtsZ ring formation. Inhibits FtsZ ring formation at polar sites. Interacts either with FtsZ or with one of its binding partners to promote depolymerization. This is Septation ring formation regulator EzrA from Bacillus velezensis (strain DSM 23117 / BGSC 10A6 / LMG 26770 / FZB42) (Bacillus amyloliquefaciens subsp. plantarum).